We begin with the raw amino-acid sequence, 312 residues long: Probable deoxyhypusine synthase (312 aa).

Lys-285 acts as the Nucleophile in catalysis.

It belongs to the deoxyhypusine synthase family. The cofactor is NAD(+).

The catalysed reaction is [eIF5A protein]-L-lysine + spermidine = [eIF5A protein]-deoxyhypusine + propane-1,3-diamine. The protein operates within protein modification; eIF5A hypusination. Its function is as follows. Catalyzes the NAD-dependent oxidative cleavage of spermidine and the subsequent transfer of the butylamine moiety of spermidine to the epsilon-amino group of a specific lysine residue of the eIF-5A precursor protein to form the intermediate deoxyhypusine residue. This is Probable deoxyhypusine synthase from Saccharolobus islandicus (strain M.16.4 / Kamchatka #3) (Sulfolobus islandicus).